We begin with the raw amino-acid sequence, 443 residues long: ATP-dependent protease ATPase subunit HslU (443 aa).

Residues Ile-18, 60 to 65 (GVGKTE), Asp-256, Glu-321, and Arg-393 contribute to the ATP site.

The protein belongs to the ClpX chaperone family. HslU subfamily. As to quaternary structure, a double ring-shaped homohexamer of HslV is capped on each side by a ring-shaped HslU homohexamer. The assembly of the HslU/HslV complex is dependent on binding of ATP.

Its subcellular location is the cytoplasm. Its function is as follows. ATPase subunit of a proteasome-like degradation complex; this subunit has chaperone activity. The binding of ATP and its subsequent hydrolysis by HslU are essential for unfolding of protein substrates subsequently hydrolyzed by HslV. HslU recognizes the N-terminal part of its protein substrates and unfolds these before they are guided to HslV for hydrolysis. The polypeptide is ATP-dependent protease ATPase subunit HslU (Salmonella agona (strain SL483)).